A 190-amino-acid polypeptide reads, in one-letter code: Nascent polypeptide-associated complex subunit alpha (190 aa).

Disordered stretches follow at residues F20–K42 and S123–K155. The segment covering H30–E40 has biased composition (basic and acidic residues). Residues S37–A102 enclose the NAC-A/B domain. Residues E138 to G151 are compositionally biased toward acidic residues. Residues V152–A189 enclose the UBA domain.

Belongs to the NAC-alpha family. Part of the nascent polypeptide-associated complex (NAC), consisting of EGD2 and EGD1. NAC associates with ribosomes via EGD1.

It is found in the cytoplasm. The protein resides in the nucleus. Component of the nascent polypeptide-associated complex (NAC), a dynamic component of the ribosomal exit tunnel, protecting the emerging polypeptides from interaction with other cytoplasmic proteins to ensure appropriate nascent protein targeting. The NAC complex also promotes mitochondrial protein import by enhancing productive ribosome interactions with the outer mitochondrial membrane and blocks the inappropriate interaction of ribosomes translating non-secretory nascent polypeptides with translocation sites in the membrane of the endoplasmic reticulum. EGD2 may also be involved in transcription regulation. This is Nascent polypeptide-associated complex subunit alpha (EGD2) from Mycosarcoma maydis (Corn smut fungus).